A 297-amino-acid chain; its full sequence is uncharacterized protein (297 aa).

The segment at 175 to 199 is disordered; sequence VLPTNRNNPVRSNVDIKPVNPPSSK. Residues 176–185 are compositionally biased toward polar residues; the sequence is LPTNRNNPVR. N-linked (GlcNAc...) asparagine; by host glycosylation is present at Asn-269. The chain crosses the membrane as a helical span at residues 277-297; that stretch reads LFGSPVLLICVASLLLLIIIL.

Belongs to the ascovirus HvAV ORF18 family.

The protein localises to the membrane. This is an uncharacterized protein from Noctuidae (owlet moths).